The sequence spans 985 residues: Eukaryotic translation initiation factor 4E transporter (985 aa).

The tract at residues methionine 1–serine 24 is disordered. Serine 5 carries the post-translational modification Phosphoserine. Residues tyrosine 30–leucine 36 carry the YXXXXLphi motif motif. Phosphoserine is present on residues serine 74, serine 78, serine 115, serine 120, serine 136, and serine 138. The interaction with CSDE1 stretch occupies residues valine 131–isoleucine 161. Residues arginine 195–asparagine 211 carry the Nuclear localization signal motif. Residues arginine 208 to serine 230 form a disordered region. Residues proline 219–aspartate 240 form an interaction with DDX6 region. 4 positions are modified to phosphoserine: serine 301, serine 345, serine 353, and serine 374. Lysine 410 participates in a covalent cross-link: Glycyl lysine isopeptide (Lys-Gly) (interchain with G-Cter in SUMO2). A Phosphoserine modification is found at serine 417. The short motif at valine 438–valine 447 is the Nuclear export signal element. Residues aspartate 448 to threonine 490 form an interaction with LSM14A region. An N6-acetyllysine modification is found at lysine 486. A phosphoserine mark is found at serine 513, serine 564, and serine 587. The Nuclear export signal signature appears at isoleucine 613–valine 638. Disordered regions lie at residues glutamine 664–serine 693 and glutamate 707–proline 803. Serine 693 bears the Phosphoserine mark. The interval serine 695–lysine 713 is interaction with PATL1. Composition is skewed to basic and acidic residues over residues glutamate 707 to alanine 717 and aspartate 725 to glutamate 735. Low complexity predominate over residues glutamate 736 to serine 746. Residue serine 752 is modified to Phosphoserine. Residues threonine 754–arginine 776 show a composition bias toward polar residues. 2 positions are modified to phosphoserine: serine 920 and serine 951. The interval glutamine 922–valine 953 is disordered. Positions glutamine 940 to glutamine 985 are interaction with LSM14A.

This sequence belongs to the 4E-T/EIF4E-T family. As to quaternary structure, interacts (via YXXXXLphi motif) with EIF4E. Interacts (via YXXXXLphi motif) with EIF4E2. Interacts with DDX6. Interacts with CSDE1/UNR. Interacts with CNOT1; promoting association with the CCR4-NOT complex. Interacts with LSM14A; promoting EIF4ENIF1 localization to P-bodies. Interacts with PATL1. Interacts with importin beta only in the presence of importin alpha, suggesting a direct interaction with importin alpha. Interacts with APOBEC3G in an RNA-dependent manner. Phosphorylation by MAPK8/JNK1 and or MAPK9/JNK2 in response to oxidative stress promotes P-body assembly. Phosphorylated during meiotic maturation. Widely expressed.

It is found in the cytoplasm. It localises to the P-body. The protein resides in the nucleus. The protein localises to the PML body. Its subcellular location is the nucleus speckle. In terms of biological role, EIF4E-binding protein that regulates translation and stability of mRNAs in processing bodies (P-bodies). Plays a key role in P-bodies to coordinate the storage of translationally inactive mRNAs in the cytoplasm and prevent their degradation. Acts as a binding platform for multiple RNA-binding proteins: promotes deadenylation of mRNAs via its interaction with the CCR4-NOT complex, and blocks decapping via interaction with eIF4E (EIF4E and EIF4E2), thereby protecting deadenylated and repressed mRNAs from degradation. Component of a multiprotein complex that sequesters and represses translation of proneurogenic factors during neurogenesis. Promotes miRNA-mediated translational repression. Required for the formation of P-bodies. Involved in mRNA translational repression mediated by the miRNA effector TNRC6B by protecting TNRC6B-targeted mRNAs from decapping and subsequent decay. Also acts as a nucleoplasmic shuttling protein, which mediates the nuclear import of EIF4E and DDX6 by a piggy-back mechanism. This is Eukaryotic translation initiation factor 4E transporter from Homo sapiens (Human).